Consider the following 92-residue polypeptide: Small ribosomal subunit protein uS19 (92 aa).

The protein belongs to the universal ribosomal protein uS19 family.

In terms of biological role, protein S19 forms a complex with S13 that binds strongly to the 16S ribosomal RNA. In Methylobacterium nodulans (strain LMG 21967 / CNCM I-2342 / ORS 2060), this protein is Small ribosomal subunit protein uS19.